We begin with the raw amino-acid sequence, 3993 residues long: Intermembrane lipid transfer protein VPS13B (3993 aa).

A Chorein N-terminal domain is found at 2–102; sequence LESYVTPILM…KDGIQDDHES (101 aa). The disordered stretch occupies residues 100–133; the sequence is HESCGSNSTNRSTAENTKSSIKPRRIQQAAPADP. The span at 103–119 shows a compositional bias: polar residues; the sequence is CGSNSTNRSTAENTKSS. Phosphoserine occurs at positions 413, 998, 1001, and 1032. Disordered stretches follow at residues 1262–1303, 1616–1637, and 1735–1770; these read SPVW…PFSD, DQLK…ERNS, and TKAT…DSGI. The segment covering 1264 to 1291 has biased composition (polar residues); it reads VWSSVGTAPPDTSTCSPSADIGTTTEGD. The span at 1739-1750 shows a compositional bias: basic and acidic residues; the sequence is EISKQEQKKVDT. Over residues 1756 to 1770 the composition is skewed to polar residues; that stretch reads AETSSRYSGAQDSGI. Serine 1789 carries the phosphoserine modification. Residues 2048–2067 form a disordered region; sequence HSSAHSKETSTPSDSILNMD. Residues 2604–2683 enclose the SHR-BD domain; sequence HFVICNDTQE…TIQYKGRTAS (80 aa). Positions 3880-3993 are localizes the protein to the Golgi apparatus; sequence AFPITEISCA…KNKALRKGFS (114 aa).

Belongs to the VPS13 family. In terms of assembly, interacts with STX6. Interacts with STX12 (via N-terminus). Interacts with RAB6A isoform 1 (GTP-bound) and isoform 2 (GTP-bound). Interacts with RAB6B (GTP-bound). Ubiquitously expressed in all examined tissues.

It localises to the recycling endosome membrane. Its subcellular location is the cytoplasmic vesicle. The protein resides in the secretory vesicle. The protein localises to the acrosome membrane. It is found in the golgi apparatus. It localises to the cis-Golgi network membrane. Its subcellular location is the endoplasmic reticulum-Golgi intermediate compartment membrane. The protein resides in the trans-Golgi network membrane. The protein localises to the early endosome membrane. It is found in the lysosome membrane. Mediates the transfer of lipids between membranes at organelle contact sites. Binds phosphatidylinositol 3-phosphate. Functions as a tethering factor in the slow endocytic recycling pathway, to assist traffic between early and recycling endosomes. Involved in the transport of proacrosomal vesicles to the nuclear dense lamina (NDL) during spermatid development. Plays a role in the assembly of the Golgi apparatus, possibly by mediating trafficking to the Golgi membrane. Plays a role in the development of the nervous system, and may be required for neuron projection development. May also play a role during adipose tissue development. Required for maintenance of the ocular lens. Required for proper organization of the Golgi. This Mus musculus (Mouse) protein is Intermembrane lipid transfer protein VPS13B.